Consider the following 184-residue polypeptide: Gremlin-1 (184 aa).

An N-terminal signal peptide occupies residues M1 to G24. Residues G24–S77 are disordered. A glycan (N-linked (GlcNAc...) asparagine) is linked at N42. Intrachain disulfides connect C94–C144, C108–C158, C118–C176, and C122–C178. The region spanning C94 to D184 is the CTCK domain.

Belongs to the DAN family. As to quaternary structure, homodimer; can also form homooligomers. Interacts with BMP2; can form higher oligomers with BMP2. Interacts with SLIT1 and SLIT2 in a glycosylation-dependent manner. Highly expressed in small intestine, fetal brain and colon. Expression is restricted to intestinal subepithelial myofibroblasts (ISEMFs) at the crypt base. In subjects with HMPS1, by contrast, GREM1 is expressed, not only in basal ISEMFs, but also at very high levels in epithelial cells (predominantly colonocytes), with expression extending most of the way up the sides of the crypt. Weakly expressed in brain, ovary, prostate, pancreas and skeletal muscle. In brain found in the region localized around the internal capsule in the large subcortical nuclei, including caudate, putamen, substantia nigra, thalamus and subthalamus. Predominantly expressed in normal cells including neurons, astrocytes and fibroblasts.

It localises to the secreted. In terms of biological role, cytokine that may play an important role during carcinogenesis and metanephric kidney organogenesis, as a BMP antagonist required for early limb outgrowth and patterning in maintaining the FGF4-SHH feedback loop. Down-regulates the BMP4 signaling in a dose-dependent manner. Antagonist of BMP2; inhibits BMP2-mediated differentiation of osteoblasts (in vitro). Acts as inhibitor of monocyte chemotaxis. Can inhibit the growth or viability of normal cells but not transformed cells when is overexpressed. The sequence is that of Gremlin-1 (GREM1) from Homo sapiens (Human).